The chain runs to 462 residues: Argininosuccinate lyase (462 aa).

The protein belongs to the lyase 1 family. Argininosuccinate lyase subfamily.

It is found in the cytoplasm. The enzyme catalyses 2-(N(omega)-L-arginino)succinate = fumarate + L-arginine. It participates in amino-acid biosynthesis; L-arginine biosynthesis; L-arginine from L-ornithine and carbamoyl phosphate: step 3/3. In Thermus thermophilus (strain ATCC BAA-163 / DSM 7039 / HB27), this protein is Argininosuccinate lyase.